Here is a 389-residue protein sequence, read N- to C-terminus: Phospho-N-acetylmuramoyl-pentapeptide-transferase (389 aa).

Transmembrane regions (helical) follow at residues 21-41, 71-91, 97-117, 134-154, 167-187, 190-210, 222-242, 259-279, 286-306, 311-331, and 366-386; these read YITM…LVAG, TPTM…LLWA, FVWV…MDDY, FFWQ…AVSA, WVSS…VPFF, VSYP…IVGT, GLAI…AYVV, AAEL…FLWF, VFMG…IAVI, IVLF…MMQV, and QVVV…LSTL.

Belongs to the glycosyltransferase 4 family. MraY subfamily. The cofactor is Mg(2+).

The protein resides in the cell inner membrane. It catalyses the reaction UDP-N-acetyl-alpha-D-muramoyl-L-alanyl-gamma-D-glutamyl-meso-2,6-diaminopimeloyl-D-alanyl-D-alanine + di-trans,octa-cis-undecaprenyl phosphate = di-trans,octa-cis-undecaprenyl diphospho-N-acetyl-alpha-D-muramoyl-L-alanyl-D-glutamyl-meso-2,6-diaminopimeloyl-D-alanyl-D-alanine + UMP. The protein operates within cell wall biogenesis; peptidoglycan biosynthesis. Functionally, catalyzes the initial step of the lipid cycle reactions in the biosynthesis of the cell wall peptidoglycan: transfers peptidoglycan precursor phospho-MurNAc-pentapeptide from UDP-MurNAc-pentapeptide onto the lipid carrier undecaprenyl phosphate, yielding undecaprenyl-pyrophosphoryl-MurNAc-pentapeptide, known as lipid I. In Bordetella petrii (strain ATCC BAA-461 / DSM 12804 / CCUG 43448), this protein is Phospho-N-acetylmuramoyl-pentapeptide-transferase.